Consider the following 292-residue polypeptide: MIKIIYLIVLLVLLFKNNHIIIKADDCPFPQIPIKTLSGTWYDDPDHASCGFEKLTGPLGPGNRLVVALGSKLFDKGANCGQCYDVTSPFNNKTITVMATDSCHDAGYCQADNHFDFYKEAFDLLGSPSGVISGNSGLSYIKVPCPTYGNVKIMMKDGSNEFWTSFLIFNSRILIKQVSIKLSNSQQFIDLNRQPQGNYWPSTNMVSGEFEVRIESIGGEFIYVKIPSIESRKIYDTGNQFSADGCVGNKYDPYAPFQITSNSNNILPPSLYIIFLISILFLIINNIFSNKY.

Positions 1–24 (MIKIIYLIVLLVLLFKNNHIIIKA) are cleaved as a signal peptide. At 25-267 (DDCPFPQIPI…QITSNSNNIL (243 aa)) the chain is on the extracellular side. Positions 47–150 (HASCGFEKLT…IKVPCPTYGN (104 aa)) constitute an Expansin-like EG45 domain. Intrachain disulfides connect C50/C80 and C83/C145. N92 is a glycosylation site (N-linked (GlcNAc...) asparagine). Residues 268-288 (PPSLYIIFLISILFLIINNIF) form a helical membrane-spanning segment. Over 289–292 (SNKY) the chain is Cytoplasmic.

The protein belongs to the expansin family. Expansin A subfamily.

It localises to the membrane. May serve to lubricate the movement of the cellulose microfibrils during cell growth and wall extension and/or may serve to maintain the fluid state of the slug cell wall. This Dictyostelium discoideum (Social amoeba) protein is Expansin-like protein 6 (expl6).